The primary structure comprises 544 residues: MTPAEIKRLYQIIKVQLEYGLDELLPDHQLTKAPLLMRKSLFWIKNKHPEKPLGERLRLALQELGPVWIKFGQMMSTRRDLFPPHIADPLALLQDQVAPFDGQLAKEQMELALGGPLQNWFTEFDIKPLASASIAQVHTARLKDTNQEVVLKVIRPDIRPVIDSDLKLMHRMASIVAGAMPEARRLKPVEVVREYEKTLLDELDLRREAANAIQLRRNFEGSEELYVPEVFPDFSNETVMVSERIYGIQVSDIEGLEANGTNMKLLAERGVSVFFTQVFRDSFFHADMHPGNVFVKPEHPENPMWIGLDCGIVGTLNSEDKRYLAENFLAFFNRDYRRVAELHVDSGWVPADTNVDEFEFAIRIVCEPIFAKPLCEISFGHVLLNLFNTARRFNMEVQPQLVLLQKTLLYVEGLGRQLYPQLDLWETAKPFLEEWMMNQVGPQALVNAIKDRAPFWAEKLPELPELLYDSLRQGKAMNQRMDQLYQGYRHSKRQQATGKFLFGVGATLVVCSAILVDNAYEQLSIASGIAGVTFWLLSWRAYRR.

A Protein kinase domain is found at 123 to 501 (EFDIKPLASA…KRQQATGKFL (379 aa)). ATP is bound by residues 129–137 (LASASIAQV) and Lys-152. The active-site Proton acceptor is Asp-287. 2 helical membrane passes run 496–516 (ATGKFLFGVGATLVVCSAILV) and 519–539 (AYEQLSIASGIAGVTFWLLSW).

The protein belongs to the ABC1 family. UbiB subfamily.

The protein localises to the cell inner membrane. It participates in cofactor biosynthesis; ubiquinone biosynthesis [regulation]. Its function is as follows. Is probably a protein kinase regulator of UbiI activity which is involved in aerobic coenzyme Q (ubiquinone) biosynthesis. This Vibrio campbellii (strain ATCC BAA-1116) protein is Probable protein kinase UbiB.